Reading from the N-terminus, the 346-residue chain is Tubulin-specific chaperone C (346 aa).

Residue methionine 1 is modified to N-acetylmethionine. The segment at methionine 1–lysine 54 is disordered. The segment covering arginine 28–lysine 54 has biased composition (basic and acidic residues). Residues serine 80 and serine 168 each carry the phosphoserine modification. The C-CAP/cofactor C-like domain maps to proline 171–tryptophan 323.

The protein belongs to the TBCC family. Supercomplex made of cofactors A to E. Cofactors A and D function by capturing and stabilizing tubulin in a quasi-native conformation. Cofactor E binds to the cofactor D-tubulin complex; interaction with cofactor C then causes the release of tubulin polypeptides that are committed to the native state.

Its subcellular location is the cytoplasm. Functionally, tubulin-folding protein; involved in the final step of the tubulin folding pathway. This chain is Tubulin-specific chaperone C (TBCC), found in Pongo abelii (Sumatran orangutan).